Consider the following 472-residue polypeptide: Tubulin gamma chain (472 aa).

Position 142–148 (142–148 (AGGTGSG)) interacts with GTP.

Belongs to the tubulin family. As to quaternary structure, component of the gamma-tubulin small complex (gamma-TuSC) composed of tubulin gamma chain, gamma-tubulin complex protein 2 (GCP2) and gamma-tubulin complex protein 3 (GCP3). Interacts with GCP2 and GCP3. Interacts with EB1.

It is found in the cytoplasm. It localises to the cytoskeleton. The protein localises to the flagellum axoneme. Its subcellular location is the flagellum basal body. The protein resides in the spindle. It is found in the microtubule organizing center. Its function is as follows. Tubulin is the major constituent of microtubules (Potential). The gamma chain is found at microtubule organizing centers (MTOC) such as the centrosome. Component of the gamma-tubulin small complex (gamma-TuSC) involved in microtubule nucleation for the formation of median bodies and in the biogenesis of flagella. Gamma-TuSC may be required for the correct positioning of EB1 within the trophozoites. The polypeptide is Tubulin gamma chain (Giardia intestinalis (strain ATCC 50803 / WB clone C6) (Giardia lamblia)).